The following is a 433-amino-acid chain: Gamma-glutamyl phosphate reductase (433 aa).

The protein belongs to the gamma-glutamyl phosphate reductase family.

The protein localises to the cytoplasm. It catalyses the reaction L-glutamate 5-semialdehyde + phosphate + NADP(+) = L-glutamyl 5-phosphate + NADPH + H(+). The protein operates within amino-acid biosynthesis; L-proline biosynthesis; L-glutamate 5-semialdehyde from L-glutamate: step 2/2. Functionally, catalyzes the NADPH-dependent reduction of L-glutamate 5-phosphate into L-glutamate 5-semialdehyde and phosphate. The product spontaneously undergoes cyclization to form 1-pyrroline-5-carboxylate. The sequence is that of Gamma-glutamyl phosphate reductase from Psychrobacter cryohalolentis (strain ATCC BAA-1226 / DSM 17306 / VKM B-2378 / K5).